Consider the following 70-residue polypeptide: Putative membrane protein insertion efficiency factor (70 aa).

The protein belongs to the UPF0161 family.

The protein localises to the cell inner membrane. Its function is as follows. Could be involved in insertion of integral membrane proteins into the membrane. This Desulforapulum autotrophicum (strain ATCC 43914 / DSM 3382 / VKM B-1955 / HRM2) (Desulfobacterium autotrophicum) protein is Putative membrane protein insertion efficiency factor.